Here is a 530-residue protein sequence, read N- to C-terminus: Light-independent protochlorophyllide reductase subunit B (530 aa).

Aspartate 36 is a [4Fe-4S] cluster binding site. The active-site Proton donor is aspartate 287. 422 to 423 (GL) lines the substrate pocket. The disordered stretch occupies residues 453-472 (PAVQTASSEPQPSAIETPSA). Positions 454-463 (AVQTASSEPQ) are enriched in polar residues.

It belongs to the ChlB/BchB/BchZ family. As to quaternary structure, protochlorophyllide reductase is composed of three subunits; BchL, BchN and BchB. Forms a heterotetramer of two BchB and two BchN subunits. [4Fe-4S] cluster is required as a cofactor.

The catalysed reaction is chlorophyllide a + oxidized 2[4Fe-4S]-[ferredoxin] + 2 ADP + 2 phosphate = protochlorophyllide a + reduced 2[4Fe-4S]-[ferredoxin] + 2 ATP + 2 H2O. The protein operates within porphyrin-containing compound metabolism; bacteriochlorophyll biosynthesis (light-independent). In terms of biological role, component of the dark-operative protochlorophyllide reductase (DPOR) that uses Mg-ATP and reduced ferredoxin to reduce ring D of protochlorophyllide (Pchlide) to form chlorophyllide a (Chlide). This reaction is light-independent. The NB-protein (BchN-BchB) is the catalytic component of the complex. The protein is Light-independent protochlorophyllide reductase subunit B of Rhodopseudomonas palustris (strain BisB18).